Consider the following 945-residue polypeptide: Xylosyltransferase 1 (945 aa).

Topologically, residues 1 to 17 (MQAAPCARRLARRSHSA) are cytoplasmic. A helical; Signal-anchor for type II membrane protein transmembrane segment spans residues 18–38 (LLAALTVLLLQTLVVWNFSSL). The Lumenal segment spans residues 39 to 945 (DSGAGERRGG…GAVKPDGRLR (907 aa)). A disordered region spans residues 42-245 (AGERRGGAAV…KYDQPPKCDI (204 aa)). Residues 76-103 (RGGGGGGGGCGGGGRGPQARARGGGPGE) are compositionally biased toward gly residues. The span at 131–147 (KVRTDSNNENSVPKDFE) shows a compositional bias: basic and acidic residues. Residues 149-158 (VDNSNFAPRT) are compositionally biased toward polar residues. Over residues 163-190 (HQPELAKKPPSRQKELLKRKLEQQEKGK) the composition is skewed to basic and acidic residues. A glycan (N-linked (GlcNAc...) asparagine) is linked at Asn-212. The span at 235–245 (TKYDQPPKCDI) shows a compositional bias: basic and acidic residues. Intrachain disulfides connect Cys-243–Cys-271, Cys-287–Cys-528, Cys-547–Cys-560, and Cys-549–Cys-558. Residues Val-319, Asp-347, and 376 to 378 (TIW) contribute to the UDP-alpha-D-xylose site. N-linked (GlcNAc...) asparagine glycosylation occurs at Asn-407. 480–481 (DW) contributes to the UDP-alpha-D-xylose binding site. UDP-alpha-D-xylose contacts are provided by residues Ser-561 and 584 to 585 (RK). 2 disulfide bridges follow: Cys-661–Cys-913 and Cys-906–Cys-919. An N-linked (GlcNAc...) asparagine glycan is attached at Asn-763. A disordered region spans residues 926-945 (SFSPDPKSELGAVKPDGRLR).

This sequence belongs to the glycosyltransferase 14 family. XylT subfamily. In terms of assembly, monomer. A divalent metal cation is required as a cofactor. Contains 7 disulfide bonds. Post-translationally, N-glycosylated.

The protein resides in the golgi apparatus membrane. The enzyme catalyses UDP-alpha-D-xylose + L-seryl-[protein] = 3-O-(beta-D-xylosyl)-L-seryl-[protein] + UDP + H(+). The protein operates within glycan metabolism; chondroitin sulfate biosynthesis. It participates in glycan metabolism; heparan sulfate biosynthesis. Catalyzes the first step in the biosynthesis of chondroitin sulfate and dermatan sulfate proteoglycans, such as DCN. Transfers D-xylose from UDP-D-xylose to specific serine residues of the core protein. Required for normal maturation of chondrocytes during bone development, normal onset of ossification and normal embryonic and postnatal skeleton development, especially of the long bones. The sequence is that of Xylosyltransferase 1 (XYLT1) from Pan troglodytes (Chimpanzee).